We begin with the raw amino-acid sequence, 316 residues long: Protoheme IX farnesyltransferase (316 aa).

9 helical membrane-spanning segments follow: residues 32–52 (VMSL…GHIH), 53–73 (PVLG…SGAL), 93–113 (IPAG…LSGF), 116–136 (VILG…TIFF), 152–172 (NIVI…ACVT), 180–200 (TVLF…LALF), 221–241 (VTKH…VLPS), 252–271 (LVAA…VWRM), and 289–309 (IFYL…PVLV).

Belongs to the UbiA prenyltransferase family. Protoheme IX farnesyltransferase subfamily.

The protein resides in the cell inner membrane. The catalysed reaction is heme b + (2E,6E)-farnesyl diphosphate + H2O = Fe(II)-heme o + diphosphate. The protein operates within porphyrin-containing compound metabolism; heme O biosynthesis; heme O from protoheme: step 1/1. Its function is as follows. Converts heme B (protoheme IX) to heme O by substitution of the vinyl group on carbon 2 of heme B porphyrin ring with a hydroxyethyl farnesyl side group. The protein is Protoheme IX farnesyltransferase of Rhizobium johnstonii (strain DSM 114642 / LMG 32736 / 3841) (Rhizobium leguminosarum bv. viciae).